A 349-amino-acid polypeptide reads, in one-letter code: uncharacterized protein (349 aa).

Ser2 is subject to Phosphoserine.

This is an uncharacterized protein from Saccharomyces cerevisiae (strain ATCC 204508 / S288c) (Baker's yeast).